Consider the following 542-residue polypeptide: 2,3-bisphosphoglycerate-independent phosphoglycerate mutase (542 aa).

D24 and S74 together coordinate Mn(2+). Catalysis depends on S74, which acts as the Phosphoserine intermediate. Residues H135, 165–166 (RD), R197, R203, 268–271 (RPDR), and K341 each bind substrate. Mn(2+) contacts are provided by D408, H412, D449, H450, and H467.

This sequence belongs to the BPG-independent phosphoglycerate mutase family. Monomer. Requires Mn(2+) as cofactor.

The catalysed reaction is (2R)-2-phosphoglycerate = (2R)-3-phosphoglycerate. Its pathway is carbohydrate degradation; glycolysis; pyruvate from D-glyceraldehyde 3-phosphate: step 3/5. Its function is as follows. Catalyzes the interconversion of 2-phosphoglycerate and 3-phosphoglycerate. The chain is 2,3-bisphosphoglycerate-independent phosphoglycerate mutase from Prochlorococcus marinus (strain NATL1A).